We begin with the raw amino-acid sequence, 105 residues long: MRRRYSMDINRAIRVAVDTGNVVLGTKQAIKNIKHGEGKLVIIAGNCAKDVKEDIFYYTKLSETPVYTHQVTSIELGAICGKPFPVSALLVLEPGNSAILNINNE.

The protein belongs to the eukaryotic ribosomal protein eL30 family.

This Methanococcus vannielii (strain ATCC 35089 / DSM 1224 / JCM 13029 / OCM 148 / SB) protein is Large ribosomal subunit protein eL30 (rpl30e).